We begin with the raw amino-acid sequence, 838 residues long: P protein (838 aa).

Over 1–179 the chain is Cytoplasmic; sequence MHLEGRDGRR…KLRRCVQWLK (179 aa). 2 disordered regions span residues 38–60 and 74–94; these read LPRGAGGADPSHSCPRGAAGQSS and KGRSHSSLPQMSSSRSKDSCF. A compositionally biased stretch (polar residues) spans 78–87; that stretch reads HSSLPQMSSS. Residues 180–197 traverse the membrane as a helical segment; it reads VMGLFAFVVLCSILFSLY. Residues 198 to 330 lie on the Extracellular side of the membrane; the sequence is PDQGKLWQLL…QYLRGSVETQ (133 aa). Asn214, Asn218, and Asn273 each carry an N-linked (GlcNAc...) asparagine glycan. A helical transmembrane segment spans residues 331–347; the sequence is VTIATAILAGVYALIIF. The Cytoplasmic segment spans residues 348–353; it reads EIVHRT. Residues 354–370 traverse the membrane as a helical segment; the sequence is LAAMLGSLAALAALAVI. Residues 371–384 are Extracellular-facing; sequence GDRPSLTHVVEWID. Residues 385-401 traverse the membrane as a helical segment; it reads FETLALLFGMMILVAIF. The Cytoplasmic segment spans residues 402–423; it reads SETGFFDYCAVKAYRLSRGRVW. A helical transmembrane segment spans residues 424–440; sequence AMIIMLCLIAAVLSAFL. At 441–513 the chain is on the extracellular side; that stretch reads DNVTTMLLFT…DFAGFTAHMF (73 aa). An N-linked (GlcNAc...) asparagine glycan is attached at Asn442. A helical transmembrane segment spans residues 514 to 530; the sequence is IGICLVLLVCFPLLRLL. Residues 531–620 are Cytoplasmic-facing; the sequence is YWNRKLYNKE…LQKKHRISDG (90 aa). The helical transmembrane segment at 621–637 threads the bilayer; that stretch reads ILLAKCLTVLGFVIFMF. Over 638–647 the chain is Extracellular; it reads FLNSFVPGIH. Residues 648–664 form a helical membrane-spanning segment; that stretch reads LDLGWIAILGAIWLLIL. Residues 665–679 are Cytoplasmic-facing; that stretch reads ADIHDFEIILHRVEW. A helical membrane pass occupies residues 680–696; it reads ATLLFFAALFVLMEALA. Topologically, residues 697–720 are extracellular; that stretch reads HLHLIEYVGEQTALLIKMVPEEQR. Residues 721 to 737 form a helical membrane-spanning segment; the sequence is LIAAIVLVVWVSALASS. Residues 738–760 are Cytoplasmic-facing; the sequence is LIDNIPFTATMIPVLLNLSHDPE. Residues 761-777 traverse the membrane as a helical segment; that stretch reads VGLPAPPLMYALAFGAC. The Extracellular portion of the chain corresponds to 778-817; it reads LGGNGTLIGASANVVCAGIAEQHGYGFSFMEFFRLGFPMM. Asn781 is a glycosylation site (N-linked (GlcNAc...) asparagine). The chain crosses the membrane as a helical span at residues 818–834; sequence VVSCTVGMCYLLVAHVV. Over 835–838 the chain is Cytoplasmic; sequence VGWN.

The protein belongs to the CitM (TC 2.A.11) transporter family. In terms of tissue distribution, expressed in melanocytes and retinal pigment epithelium.

The protein resides in the melanosome membrane. The catalysed reaction is chloride(in) = chloride(out). Functionally, contributes to a melanosome-specific anion (chloride) current that modulates melanosomal pH for optimal tyrosinase activity required for melanogenesis and the melanosome maturation. One of the components of the mammalian pigmentary system. May serve as a key control point at which ethnic skin color variation is determined. Major determinant of brown and/or blue eye color. Seems to regulate the post-translational processing of tyrosinase, which catalyzes the limiting reaction in melanin synthesis. This chain is P protein, found in Homo sapiens (Human).